The following is a 640-amino-acid chain: Epithelial sodium channel subunit beta (640 aa).

Residues 1-50 lie on the Cytoplasmic side of the membrane; that stretch reads MHVKKYLLKGLHRLQKGPGYTYKELLVWYCDNTNTHGPKRIICEGPKKKA. The helical transmembrane segment at 51 to 71 threads the bilayer; the sequence is MWFLLTLLFAALVCWQWGIFI. Residues 72-532 are Extracellular-facing; the sequence is RTYLSWEVSV…GGQFGFWMGG (461 aa). Intrachain disulfides connect cysteine 98–cysteine 272, cysteine 184–cysteine 189, cysteine 196–cysteine 203, cysteine 249–cysteine 256, cysteine 361–cysteine 448, cysteine 386–cysteine 444, cysteine 390–cysteine 440, cysteine 399–cysteine 426, and cysteine 401–cysteine 415. N-linked (GlcNAc...) asparagine glycosylation occurs at asparagine 260. A helical transmembrane segment spans residues 533–553; sequence SVLCLIEFGEIIIDFVWITII. Residues 554-640 are Cytoplasmic-facing; that stretch reads KLVALAKSLR…IESDSEGDAI (87 aa). A disordered region spans residues 590-640; that stretch reads FQPDTAPRSPNTGPYPSEQALPIPGTPPPNYDSLRLQPLDVIESDSEGDAI. A PY motif; recruits WW domain-containing proteins and is thereby required for ubiquitination and inhibition of the channel by NEDD4 and NEDD4L motif is present at residues 616 to 620; it reads PPPNY. The span at 631–640 shows a compositional bias: acidic residues; sequence IESDSEGDAI. A phosphoserine mark is found at serine 633 and serine 635.

It belongs to the amiloride-sensitive sodium channel (TC 1.A.6) family. SCNN1B subfamily. As to quaternary structure, component of the heterotrimeric epithelial sodium channel (ENaC) composed of an alpha/SCNN1A, a beta/SCNN1B and a gamma/SCNN1G subunit. An additional delta/SCNN1D subunit can replace the alpha/SCNN1A subunit to form an alternative channel with specific properties. Interacts with WWP1 (via WW domains). Interacts with WWP2 (via WW domains); inhibits the channel. Interacts with the full-length immature form of PCSK9 (pro-PCSK9); inhibits ENaC by promoting its proteasomal degradation. Interacts (N-glycosylated) with BPIFA1; the interaction is direct and inhibits the proteolytic processing of SCNN1A and SCNN1G and the activation of ENaC. Post-translationally, ubiquitinated. Can be ubiquitinated at multiple sites and undergo monoubiquitination and polyubiquitination. Ubiquitination by NEDD4 or NEDD4L inhibits the ENaC channel through endocytosis, intracellular retention and degradation of its individual subunits. However, some studies could not confirm the ubiquitination of this subunit of the ENaC. Phosphorylated on serine and threonine residues. Aldosterone and insulin increase the basal level of phosphorylation. In terms of processing, N-glycosylated. N-glycosylation is required for interaction with BPIFA1. In terms of tissue distribution, detected in placenta, lung and kidney. Expressed in kidney (at protein level).

The protein resides in the apical cell membrane. Its subcellular location is the cytoplasmic vesicle membrane. It carries out the reaction Na(+)(in) = Na(+)(out). With respect to regulation, originally identified and characterized by its inhibition by the diuretic drug amiloride. Functionally, this is one of the three pore-forming subunits of the heterotrimeric epithelial sodium channel (ENaC), a critical regulator of sodium balance and fluid homeostasis. ENaC operates in epithelial tissues, where it mediates the electrodiffusion of sodium ions from extracellular fluid through the apical membrane of cells, with water following osmotically. It plays a key role in maintaining sodium homeostasis through electrogenic sodium reabsorption in the kidneys. Additionally, ENaC is essential for airway surface liquid homeostasis, which is crucial for proper mucus clearance. The sequence is that of Epithelial sodium channel subunit beta from Homo sapiens (Human).